A 59-amino-acid polypeptide reads, in one-letter code: Large ribosomal subunit protein uL30 (59 aa).

It belongs to the universal ribosomal protein uL30 family. As to quaternary structure, part of the 50S ribosomal subunit.

The polypeptide is Large ribosomal subunit protein uL30 (Escherichia coli (strain UTI89 / UPEC)).